We begin with the raw amino-acid sequence, 420 residues long: Probable pectate lyase C (420 aa).

The N-terminal stretch at 1–20 (MKLSAPLLVSLAAFSQAVTA) is a signal peptide. N-linked (GlcNAc...) asparagine glycans are attached at residues Asn49, Asn165, and Asn202. Residue Arg205 is part of the active site. Residues 262-297 (NANFHGYVQNNYYDPDKDGQLDGFELGVSSSNYGGV) enclose the EF-hand domain. Positions 275, 277, 279, 281, and 286 each coordinate Ca(2+). The interval 358 to 396 (TMGGPGTLNGGTPAKDTDGDGIPDEAEKQLGTDPNTNDS) is disordered. Asn394 carries an N-linked (GlcNAc...) asparagine glycan.

Belongs to the polysaccharide lyase 1 family. Requires Ca(2+) as cofactor.

It localises to the secreted. The catalysed reaction is Eliminative cleavage of (1-&gt;4)-alpha-D-galacturonan to give oligosaccharides with 4-deoxy-alpha-D-galact-4-enuronosyl groups at their non-reducing ends.. In terms of biological role, pectinolytic enzyme consist of four classes of enzymes: pectin lyase, polygalacturonase, pectin methylesterase and rhamnogalacturonase. Among pectinolytic enzymes, pectin lyase is the most important in depolymerization of pectin, since it cleaves internal glycosidic bonds of highly methylated pectins. Favors pectate, the anion, over pectin, the methyl ester. The sequence is that of Probable pectate lyase C (plyC) from Aspergillus fumigatus (strain CBS 144.89 / FGSC A1163 / CEA10) (Neosartorya fumigata).